The sequence spans 556 residues: Phosphoenolpyruvate-protein phosphotransferase (556 aa).

His-186 functions as the Tele-phosphohistidine intermediate in the catalytic mechanism. Residues Arg-288 and Arg-325 each contribute to the phosphoenolpyruvate site. Mg(2+) is bound by residues Glu-415 and Asp-439. Phosphoenolpyruvate contacts are provided by residues Asn-438–Asp-439 and Arg-449. Cys-486 acts as the Proton donor in catalysis.

It belongs to the PEP-utilizing enzyme family. As to quaternary structure, homodimer. It depends on Mg(2+) as a cofactor.

The protein localises to the cytoplasm. The enzyme catalyses L-histidyl-[protein] + phosphoenolpyruvate = N(pros)-phospho-L-histidyl-[protein] + pyruvate. In terms of biological role, general (non sugar-specific) component of the phosphoenolpyruvate-dependent sugar phosphotransferase system (sugar PTS). This major carbohydrate active-transport system catalyzes the phosphorylation of incoming sugar substrates concomitantly with their translocation across the cell membrane. Enzyme I transfers the phosphoryl group from phosphoenolpyruvate (PEP) to the phosphoryl carrier protein (HPr). The sequence is that of Phosphoenolpyruvate-protein phosphotransferase (ptsI) from Streptomyces coelicolor (strain ATCC BAA-471 / A3(2) / M145).